A 463-amino-acid chain; its full sequence is Trigger factor (463 aa).

The PPIase FKBP-type domain occupies 162–243 (GDVVTLDLEA…VSQVAARELP (82 aa)). The tract at residues 427-463 (TNGEIVDLDDEDETESTPETTEAAEAAEESTEDKPEA) is disordered. A compositionally biased stretch (acidic residues) spans 432-442 (VDLDDEDETES).

Belongs to the FKBP-type PPIase family. Tig subfamily.

It is found in the cytoplasm. The catalysed reaction is [protein]-peptidylproline (omega=180) = [protein]-peptidylproline (omega=0). Involved in protein export. Acts as a chaperone by maintaining the newly synthesized protein in an open conformation. Functions as a peptidyl-prolyl cis-trans isomerase. The chain is Trigger factor from Streptomyces avermitilis (strain ATCC 31267 / DSM 46492 / JCM 5070 / NBRC 14893 / NCIMB 12804 / NRRL 8165 / MA-4680).